A 519-amino-acid polypeptide reads, in one-letter code: Cyclic AMP-responsive element-binding protein 3-like protein 2 (519 aa).

Over 1-374 the chain is Cytoplasmic; that stretch reads MEIMDSGEPF…SCRVTGTQTS (374 aa). Disordered regions lie at residues 58–77, 85–121, and 193–261; these read GRGDAMDTEEELTRASPVPP, YSLCGDSRPQSPLSHLPGEPGSDAADSESDEWPMEQE, and GLEC…SGPL. The span at 109-119 shows a compositional bias: acidic residues; the sequence is ADSESDEWPME. Low complexity-rich tracts occupy residues 205–217 and 240–249; these read SSVGSDSEGSQSP and PSSLSSSPLL. The bZIP domain occupies 291-354; sequence ALKKIRRKIK…KSLLQQLHSL (64 aa). The basic motif stretch occupies residues 293–322; that stretch reads KKIRRKIKNKISAQESRRKKKEYVDALEKK. The leucine-zipper stretch occupies residues 333-354; the sequence is LRRKVENLECTNKSLLQQLHSL. A helical; Signal-anchor for type II membrane protein membrane pass occupies residues 375 to 395; it reads TCLMVVVLCFSLFLGSFYPGL. The Lumenal portion of the chain corresponds to 396 to 519; that stretch reads SPCSSITKAD…QLDRTVNETS (124 aa). The S1P recognition motif lies at 423-426; sequence RSLL. 3 N-linked (GlcNAc...) asparagine glycosylation sites follow: N485, N503, and N516.

It belongs to the bZIP family. ATF subfamily. Binds DNA as a dimer. Upon ER stress, translocated to the Golgi apparatus, where it is processed by regulated intramembrane proteolysis (RIP) to release the cytosol-facing N-terminal transcription factor domain. The cleavage is performed sequentially by site-1 and site-2 proteases (S1P/mbtps1 and S2P/mbtps2).

It localises to the endoplasmic reticulum membrane. It is found in the nucleus. Its function is as follows. Transcription factor involved in unfolded protein response (UPR). In the absence of endoplasmic reticulum (ER) stress, inserted into ER membranes, with N-terminal DNA-binding and transcription activation domains oriented toward the cytosolic face of the membrane. In response to ER stress, transported to the Golgi, where it is cleaved in a site-specific manner by resident proteases S1P/mbtps1 and S2P/mbtps2. The released N-terminal cytosolic domain is translocated to the nucleus to effect transcription of specific target genes. Plays a critical role in chondrogenesis. May protect neuroblastoma cells from ER stress-induced death. In vitro activates transcription of target genes via direct binding to the CRE site. In Danio rerio (Zebrafish), this protein is Cyclic AMP-responsive element-binding protein 3-like protein 2 (creb3l2).